The chain runs to 565 residues: Galactoside 2-alpha-L-fucosyltransferase (565 aa).

Over 1–43 (MNMLIKRVIAIKNPRGDDNNNNKLSDLETLTDKCTTCPLTLMR) the chain is Cytoplasmic. A helical; Signal-anchor for type II membrane protein membrane pass occupies residues 44-64 (VMAFFVVSFMLFSVLFSLSVV). Over 65–565 (LRDPPSDAAI…MSWGLKLVDN (501 aa)) the chain is Lumenal. N-linked (GlcNAc...) asparagine glycans are attached at residues Asn-159, Asn-263, Asn-407, and Asn-509.

This sequence belongs to the glycosyltransferase 37 family.

The protein localises to the golgi apparatus. It is found in the golgi stack membrane. It functions in the pathway protein modification; protein glycosylation. Functionally, involved in cell wall biosynthesis. Adds the terminal fucosyl residue on xyloglucan side chains. The protein is Galactoside 2-alpha-L-fucosyltransferase (FT1) of Pisum sativum (Garden pea).